The sequence spans 149 residues: Transcriptional repressor NrdR (149 aa).

A zinc finger lies at 3-34 (CPFCTAVDTKVIDSRLVGDGSQVRRRRQCLVC). The region spanning 49 to 139 (PRVVKSDEIR…VYRSFEDVRD (91 aa)) is the ATP-cone domain.

Belongs to the NrdR family. It depends on Zn(2+) as a cofactor.

In terms of biological role, negatively regulates transcription of bacterial ribonucleotide reductase nrd genes and operons by binding to NrdR-boxes. The polypeptide is Transcriptional repressor NrdR (Proteus mirabilis (strain HI4320)).